The sequence spans 146 residues: Transcriptional regulator MraZ (146 aa).

SpoVT-AbrB domains lie at 4–46 and 75–118; these read TVFR…SQTE and TVKV…PEQR.

Belongs to the MraZ family. Forms oligomers.

The protein resides in the cytoplasm. Its subcellular location is the nucleoid. This is Transcriptional regulator MraZ from Mesomycoplasma hyopneumoniae (strain 232) (Mycoplasma hyopneumoniae).